A 338-amino-acid chain; its full sequence is Glyceraldehyde-3-phosphate dehydrogenase (338 aa).

Residues 12 to 13 (RI), Asp34, and Arg79 each bind NAD(+). D-glyceraldehyde 3-phosphate contacts are provided by residues 150–152 (SCT), Thr181, 210–211 (TG), and Arg233. The active-site Nucleophile is the Cys151. Asn316 contacts NAD(+).

This sequence belongs to the glyceraldehyde-3-phosphate dehydrogenase family. In terms of assembly, homotetramer.

The protein resides in the cytoplasm. The catalysed reaction is D-glyceraldehyde 3-phosphate + phosphate + NAD(+) = (2R)-3-phospho-glyceroyl phosphate + NADH + H(+). It functions in the pathway carbohydrate degradation; glycolysis; pyruvate from D-glyceraldehyde 3-phosphate: step 1/5. The sequence is that of Glyceraldehyde-3-phosphate dehydrogenase (GPD) from Yarrowia lipolytica (strain CLIB 122 / E 150) (Yeast).